The following is a 392-amino-acid chain: Chaperone protein DnaJ (392 aa).

Positions 2-67 (DYYSILGISK…QKRDSYDRFG (66 aa)) constitute a J domain. Residues 148–226 (GVEKELVVSG…CRGQGRVKDK (79 aa)) form a CR-type zinc finger. 8 residues coordinate Zn(2+): C161, C164, C178, C181, C200, C203, C214, and C217. CXXCXGXG motif repeat units lie at residues 161–168 (CETCSGQG), 178–185 (CERCKGSG), 200–207 (CPECGGEG), and 214–221 (CSSCRGQG).

This sequence belongs to the DnaJ family. As to quaternary structure, homodimer. Zn(2+) is required as a cofactor.

The protein localises to the cytoplasm. Its function is as follows. Participates actively in the response to hyperosmotic and heat shock by preventing the aggregation of stress-denatured proteins and by disaggregating proteins, also in an autonomous, DnaK-independent fashion. Unfolded proteins bind initially to DnaJ; upon interaction with the DnaJ-bound protein, DnaK hydrolyzes its bound ATP, resulting in the formation of a stable complex. GrpE releases ADP from DnaK; ATP binding to DnaK triggers the release of the substrate protein, thus completing the reaction cycle. Several rounds of ATP-dependent interactions between DnaJ, DnaK and GrpE are required for fully efficient folding. Also involved, together with DnaK and GrpE, in the DNA replication of plasmids through activation of initiation proteins. The polypeptide is Chaperone protein DnaJ (Chlamydia pneumoniae (Chlamydophila pneumoniae)).